Reading from the N-terminus, the 247-residue chain is Caffeoyl-CoA O-methyltransferase 1 (247 aa).

Lys21 is a substrate binding site. S-adenosyl-L-methionine contacts are provided by residues Thr63, Glu85, 87–88 (GV), Ser93, Asp111, and Ala140. Asp163 contributes to the substrate binding site. Asp163 lines the a divalent metal cation pocket. Asp165 is an S-adenosyl-L-methionine binding site. Residues Asp189 and Asn190 each coordinate a divalent metal cation. Residue Asn194 coordinates substrate.

The protein belongs to the class I-like SAM-binding methyltransferase superfamily. Cation-dependent O-methyltransferase family. CCoAMT subfamily. Requires a divalent metal cation as cofactor.

It carries out the reaction (E)-caffeoyl-CoA + S-adenosyl-L-methionine = (E)-feruloyl-CoA + S-adenosyl-L-homocysteine + H(+). It functions in the pathway aromatic compound metabolism; phenylpropanoid biosynthesis. In terms of biological role, methylates caffeoyl-CoA to feruloyl-CoA and 5-hydroxyferuloyl-CoA to sinapoyl-CoA. Plays a role in the synthesis of feruloylated polysaccharides. Involved in the reinforcement of the plant cell wall. Also involved in the responding to wounding or pathogen challenge by the increased formation of cell wall-bound ferulic acid polymers. The polypeptide is Caffeoyl-CoA O-methyltransferase 1 (CCOAOMT1) (Populus trichocarpa (Western balsam poplar)).